A 151-amino-acid polypeptide reads, in one-letter code: 3-hydroxyacyl-[acyl-carrier-protein] dehydratase FabZ (151 aa).

H54 is an active-site residue.

Belongs to the thioester dehydratase family. FabZ subfamily.

The protein resides in the cytoplasm. The catalysed reaction is a (3R)-hydroxyacyl-[ACP] = a (2E)-enoyl-[ACP] + H2O. Its function is as follows. Involved in unsaturated fatty acids biosynthesis. Catalyzes the dehydration of short chain beta-hydroxyacyl-ACPs and long chain saturated and unsaturated beta-hydroxyacyl-ACPs. This is 3-hydroxyacyl-[acyl-carrier-protein] dehydratase FabZ from Idiomarina loihiensis (strain ATCC BAA-735 / DSM 15497 / L2-TR).